A 134-amino-acid chain; its full sequence is Small ribosomal subunit protein uS11 (134 aa).

Belongs to the universal ribosomal protein uS11 family. In terms of assembly, part of the 30S ribosomal subunit. Interacts with proteins S7 and S18. Binds to IF-3.

In terms of biological role, located on the platform of the 30S subunit, it bridges several disparate RNA helices of the 16S rRNA. Forms part of the Shine-Dalgarno cleft in the 70S ribosome. This chain is Small ribosomal subunit protein uS11, found in Corynebacterium diphtheriae (strain ATCC 700971 / NCTC 13129 / Biotype gravis).